Reading from the N-terminus, the 255-residue chain is Putative cysteine-rich repeat secretory protein 10 (255 aa).

A signal peptide spans 1–26; the sequence is MFSSSVSISILVVVAMQFSFIHNVLS. 2 Gnk2-homologous domains span residues 33–134 and 140–252; these read YLQH…EIYT and FKHY…LYPF.

This sequence belongs to the cysteine-rich repeat secretory protein family.

It is found in the secreted. The chain is Putative cysteine-rich repeat secretory protein 10 (CRRSP10) from Arabidopsis thaliana (Mouse-ear cress).